A 98-amino-acid polypeptide reads, in one-letter code: NADH-ubiquinone oxidoreductase chain 4L (98 aa).

3 helical membrane-spanning segments follow: residues 1–21 (MPII…GMLI), 29–49 (SLLC…LMAL), and 58–78 (IVPI…LALL).

The protein belongs to the complex I subunit 4L family. Core subunit of respiratory chain NADH dehydrogenase (Complex I) which is composed of 45 different subunits.

It localises to the mitochondrion inner membrane. The catalysed reaction is a ubiquinone + NADH + 5 H(+)(in) = a ubiquinol + NAD(+) + 4 H(+)(out). In terms of biological role, core subunit of the mitochondrial membrane respiratory chain NADH dehydrogenase (Complex I) which catalyzes electron transfer from NADH through the respiratory chain, using ubiquinone as an electron acceptor. Part of the enzyme membrane arm which is embedded in the lipid bilayer and involved in proton translocation. This chain is NADH-ubiquinone oxidoreductase chain 4L (MT-ND4L), found in Colobus guereza (Mantled guereza).